The primary structure comprises 248 residues: ATP synthase subunit a, chloroplastic (248 aa).

The next 5 helical transmembrane spans lie at 38 to 58, 96 to 116, 135 to 155, 200 to 220, and 221 to 241; these read QVLI…TIAV, VPFI…GALL, INTT…AGLA, LVVA…VMFL, and GLFT…AYIG.

The protein belongs to the ATPase A chain family. F-type ATPases have 2 components, CF(1) - the catalytic core - and CF(0) - the membrane proton channel. CF(1) has five subunits: alpha(3), beta(3), gamma(1), delta(1), epsilon(1). CF(0) has four main subunits: a, b, b' and c.

It is found in the plastid. The protein resides in the chloroplast thylakoid membrane. In terms of biological role, key component of the proton channel; it plays a direct role in the translocation of protons across the membrane. The sequence is that of ATP synthase subunit a, chloroplastic from Cycas taitungensis (Prince sago).